A 575-amino-acid chain; its full sequence is Dihydroxy-acid dehydratase (575 aa).

Residue cysteine 64 participates in [2Fe-2S] cluster binding. Aspartate 96 lines the Mg(2+) pocket. Cysteine 137 serves as a coordination point for [2Fe-2S] cluster. The Mg(2+) site is built by aspartate 138 and lysine 139. The residue at position 139 (lysine 139) is an N6-carboxylysine. Position 214 (cysteine 214) interacts with [2Fe-2S] cluster. Glutamate 465 provides a ligand contact to Mg(2+). Serine 491 serves as the catalytic Proton acceptor.

The protein belongs to the IlvD/Edd family. Homodimer. [2Fe-2S] cluster is required as a cofactor. Mg(2+) serves as cofactor.

It carries out the reaction (2R)-2,3-dihydroxy-3-methylbutanoate = 3-methyl-2-oxobutanoate + H2O. It catalyses the reaction (2R,3R)-2,3-dihydroxy-3-methylpentanoate = (S)-3-methyl-2-oxopentanoate + H2O. It functions in the pathway amino-acid biosynthesis; L-isoleucine biosynthesis; L-isoleucine from 2-oxobutanoate: step 3/4. Its pathway is amino-acid biosynthesis; L-valine biosynthesis; L-valine from pyruvate: step 3/4. Functions in the biosynthesis of branched-chain amino acids. Catalyzes the dehydration of (2R,3R)-2,3-dihydroxy-3-methylpentanoate (2,3-dihydroxy-3-methylvalerate) into 2-oxo-3-methylpentanoate (2-oxo-3-methylvalerate) and of (2R)-2,3-dihydroxy-3-methylbutanoate (2,3-dihydroxyisovalerate) into 2-oxo-3-methylbutanoate (2-oxoisovalerate), the penultimate precursor to L-isoleucine and L-valine, respectively. This chain is Dihydroxy-acid dehydratase, found in Mycobacterium bovis (strain ATCC BAA-935 / AF2122/97).